The sequence spans 228 residues: Prolactin (228 aa).

The N-terminal stretch at 1-29 is a signal peptide; it reads MCPKGSSVKGSLLLLLLMSSRFLFKAVES. Residues Cys-33 and Cys-40 are joined by a disulfide bond. Residues Ser-55, Ser-63, and Ser-119 each carry the phosphoserine modification. 2 cysteine pairs are disulfide-bonded: Cys-87-Cys-203 and Cys-220-Cys-228.

The protein belongs to the somatotropin/prolactin family. In terms of assembly, interacts with PRLR.

Its subcellular location is the secreted. Its function is as follows. Prolactin acts primarily on the mammary gland by promoting lactation. The polypeptide is Prolactin (PRL) (Monodelphis domestica (Gray short-tailed opossum)).